The following is a 172-amino-acid chain: Signal peptidase complex catalytic subunit SEC11 (172 aa).

The Cytoplasmic portion of the chain corresponds to 1–14; sequence MLSSLGNPRQAAAQ. The chain crosses the membrane as a helical; Signal-anchor for type II membrane protein span at residues 15–35; it reads LMNFALILSTAFMMWKGLSVI. The Lumenal portion of the chain corresponds to 36–172; that stretch reads TDSPSPIVVV…MGLLVVLQRE (137 aa). Catalysis depends on charge relay system residues Ser49 and His90. An N-linked (GlcNAc...) asparagine glycan is attached at Asn111. Residue Asp115 is the Charge relay system of the active site. The segment at 158-169 is C-terminal short (CTS) helix; that stretch reads VMLGIMGLLVVL.

Belongs to the peptidase S26B family. In terms of assembly, component of the signal peptidase complex (SPC) composed of a catalytic subunit SEC11 and three accessory subunits SPC1, SPC2 and SPC3. The complex induces a local thinning of the ER membrane which is used to measure the length of the signal peptide (SP) h-region of protein substrates. This ensures the selectivity of the complex towards h-regions shorter than 18-20 amino acids. SPC associates with the translocon complex.

The protein localises to the endoplasmic reticulum membrane. It carries out the reaction Cleavage of hydrophobic, N-terminal signal or leader sequences from secreted and periplasmic proteins.. Its function is as follows. Catalytic component of the signal peptidase complex (SPC) which catalyzes the cleavage of N-terminal signal sequences from nascent proteins as they are translocated into the lumen of the endoplasmic reticulum. Specifically cleaves N-terminal signal peptides that contain a hydrophobic alpha-helix (h-region) shorter than 18-20 amino acids. The protein is Signal peptidase complex catalytic subunit SEC11 (SEC11) of Fusarium vanettenii (strain ATCC MYA-4622 / CBS 123669 / FGSC 9596 / NRRL 45880 / 77-13-4) (Fusarium solani subsp. pisi).